Here is a 64-residue protein sequence, read N- to C-terminus: MSGREGGKKKPLKAPKKQSKDMDDDDVAFKQKQKEDQKAMEALKARASGKGPLGGSGIKKSGKK.

Residues 1–64 (MSGREGGKKK…GSGIKKSGKK (64 aa)) form a disordered region. A coiled-coil region spans residues 21-50 (DMDDDDVAFKQKQKEDQKAMEALKARASGK). A compositionally biased stretch (basic and acidic residues) spans 27 to 44 (VAFKQKQKEDQKAMEALK).

It belongs to the TMA7 family.

This is Translation machinery-associated protein 7 (tma7) from Tetraodon nigroviridis (Spotted green pufferfish).